Consider the following 475-residue polypeptide: Chromosomal replication initiator protein DnaA (475 aa).

The tract at residues 1–73 is domain I, interacts with DnaA modulators; it reads MTNSEQERWS…LSCWQAEMPE (73 aa). Residues 73-131 are domain II; the sequence is EVHRIDLSVRTAMRCATPAKEAPVAVEARRAERGDAKPADTRAPVMTPVAASHDALGGS. Residues 132-354 form a domain III, AAA+ region region; it reads PLDPRLTFAS…GAINRLLAHS (223 aa). ATP contacts are provided by G179, G181, K182, and T183. Residues 355 to 475 are domain IV, binds dsDNA; the sequence is KLNNQPVTLD…VEALKRQLQD (121 aa).

This sequence belongs to the DnaA family. In terms of assembly, oligomerizes as a right-handed, spiral filament on DNA at oriC.

The protein localises to the cytoplasm. Its function is as follows. Plays an essential role in the initiation and regulation of chromosomal replication. ATP-DnaA binds to the origin of replication (oriC) to initiate formation of the DNA replication initiation complex once per cell cycle. Binds the DnaA box (a 9 base pair repeat at the origin) and separates the double-stranded (ds)DNA. Forms a right-handed helical filament on oriC DNA; dsDNA binds to the exterior of the filament while single-stranded (ss)DNA is stabiized in the filament's interior. The ATP-DnaA-oriC complex binds and stabilizes one strand of the AT-rich DNA unwinding element (DUE), permitting loading of DNA polymerase. After initiation quickly degrades to an ADP-DnaA complex that is not apt for DNA replication. Binds acidic phospholipids. This is Chromosomal replication initiator protein DnaA from Bradyrhizobium sp. (strain BTAi1 / ATCC BAA-1182).